A 128-amino-acid polypeptide reads, in one-letter code: Large-conductance mechanosensitive channel (128 aa).

The next 2 helical transmembrane spans lie at 11-31 (FALKGNVLDLAVAVVIGAAFG) and 70-90 (GAFIQSIVDFIIIAFAIFIFV).

Belongs to the MscL family. In terms of assembly, homopentamer.

It localises to the cell membrane. Functionally, channel that opens in response to stretch forces in the membrane lipid bilayer. May participate in the regulation of osmotic pressure changes within the cell. The chain is Large-conductance mechanosensitive channel from Listeria monocytogenes serotype 4a (strain HCC23).